A 309-amino-acid polypeptide reads, in one-letter code: Probable ABC transporter permease protein YesP (309 aa).

6 helical membrane-spanning segments follow: residues 29-49, 84-104, 114-134, 167-187, 217-237, and 275-295; these read FIIGFLCFTVIPMGASLFLSF, FTYVLAGVPLRLGFALFIAVI, IYRTLFYLPSIIGGSVAVAIM, ALWTLILLSVWQFGSSMLIFL, LPILTPIIFFNLVMQTISAFM, and YASAMAWVMLVIVGLITLILF. The ABC transmembrane type-1 domain maps to 80 to 294; sequence LKVTFTYVLA…VIVGLITLIL (215 aa).

The protein belongs to the binding-protein-dependent transport system permease family. MalFG subfamily.

Its subcellular location is the cell membrane. Part of a binding-protein-dependent transport system. Probably responsible for the translocation of the substrate across the membrane. The polypeptide is Probable ABC transporter permease protein YesP (yesP) (Bacillus subtilis (strain 168)).